Consider the following 100-residue polypeptide: Aspartyl/glutamyl-tRNA(Asn/Gln) amidotransferase subunit C (100 aa).

It belongs to the GatC family. Heterotrimer of A, B and C subunits.

It catalyses the reaction L-glutamyl-tRNA(Gln) + L-glutamine + ATP + H2O = L-glutaminyl-tRNA(Gln) + L-glutamate + ADP + phosphate + H(+). The catalysed reaction is L-aspartyl-tRNA(Asn) + L-glutamine + ATP + H2O = L-asparaginyl-tRNA(Asn) + L-glutamate + ADP + phosphate + 2 H(+). In terms of biological role, allows the formation of correctly charged Asn-tRNA(Asn) or Gln-tRNA(Gln) through the transamidation of misacylated Asp-tRNA(Asn) or Glu-tRNA(Gln) in organisms which lack either or both of asparaginyl-tRNA or glutaminyl-tRNA synthetases. The reaction takes place in the presence of glutamine and ATP through an activated phospho-Asp-tRNA(Asn) or phospho-Glu-tRNA(Gln). The protein is Aspartyl/glutamyl-tRNA(Asn/Gln) amidotransferase subunit C of Streptococcus equi subsp. equi (strain 4047).